Consider the following 380-residue polypeptide: Cytochrome b (380 aa).

Transmembrane regions (helical) follow at residues 33–53 (FGSL…FLAM), 77–98 (WMIR…FLHI), 113–133 (WNIG…GYVL), and 178–198 (FFTL…LHLL). Heme b is bound by residues His-83 and His-97. His-182 and His-196 together coordinate heme b. His-201 lines the a ubiquinone pocket. Transmembrane regions (helical) follow at residues 226–246 (IKDI…TLLS), 288–308 (LGGV…PALH), 320–340 (LSQF…WIGG), and 347–367 (FITI…LLMP).

This sequence belongs to the cytochrome b family. As to quaternary structure, the cytochrome bc1 complex contains 11 subunits: 3 respiratory subunits (MT-CYB, CYC1 and UQCRFS1), 2 core proteins (UQCRC1 and UQCRC2) and 6 low-molecular weight proteins (UQCRH/QCR6, UQCRB/QCR7, UQCRQ/QCR8, UQCR10/QCR9, UQCR11/QCR10 and a cleavage product of UQCRFS1). This cytochrome bc1 complex then forms a dimer. It depends on heme b as a cofactor.

It localises to the mitochondrion inner membrane. Functionally, component of the ubiquinol-cytochrome c reductase complex (complex III or cytochrome b-c1 complex) that is part of the mitochondrial respiratory chain. The b-c1 complex mediates electron transfer from ubiquinol to cytochrome c. Contributes to the generation of a proton gradient across the mitochondrial membrane that is then used for ATP synthesis. The protein is Cytochrome b (MT-CYB) of Pongo pygmaeus (Bornean orangutan).